The chain runs to 387 residues: Galactokinase (387 aa).

Residue 33 to 36 participates in substrate binding; it reads EHID. ATP contacts are provided by residues Ser-67 and 124–130; that span reads GAGLSSS. Mg(2+) contacts are provided by Ser-130 and Glu-162. The Proton acceptor role is filled by Asp-174. Tyr-224 provides a ligand contact to substrate.

This sequence belongs to the GHMP kinase family. GalK subfamily.

The protein resides in the cytoplasm. It carries out the reaction alpha-D-galactose + ATP = alpha-D-galactose 1-phosphate + ADP + H(+). Its pathway is carbohydrate metabolism; galactose metabolism. Catalyzes the transfer of the gamma-phosphate of ATP to D-galactose to form alpha-D-galactose-1-phosphate (Gal-1-P). This chain is Galactokinase, found in Clostridium perfringens (strain 13 / Type A).